Reading from the N-terminus, the 391-residue chain is Methylthioribose-1-phosphate isomerase (391 aa).

The Proton donor role is filled by D267.

This sequence belongs to the eIF-2B alpha/beta/delta subunits family. MtnA subfamily.

Its subcellular location is the cytoplasm. The protein localises to the nucleus. The enzyme catalyses 5-(methylsulfanyl)-alpha-D-ribose 1-phosphate = 5-(methylsulfanyl)-D-ribulose 1-phosphate. It functions in the pathway amino-acid biosynthesis; L-methionine biosynthesis via salvage pathway; L-methionine from S-methyl-5-thio-alpha-D-ribose 1-phosphate: step 1/6. Functionally, catalyzes the interconversion of methylthioribose-1-phosphate (MTR-1-P) into methylthioribulose-1-phosphate (MTRu-1-P). The polypeptide is Methylthioribose-1-phosphate isomerase (Ajellomyces capsulatus (strain NAm1 / WU24) (Darling's disease fungus)).